Here is a 152-residue protein sequence, read N- to C-terminus: Ribosome maturation factor RimP (152 aa).

The protein belongs to the RimP family.

It is found in the cytoplasm. Its function is as follows. Required for maturation of 30S ribosomal subunits. This is Ribosome maturation factor RimP from Paraburkholderia xenovorans (strain LB400).